The following is a 537-amino-acid chain: CTP synthase (537 aa).

Residues 1 to 265 (MVHFIFVTGG…DNKVLKFFNI (265 aa)) are amidoligase domain. CTP is bound at residue Ser-13. Position 13 (Ser-13) interacts with UTP. Residues 14 to 19 (SLGKGL) and Asp-71 each bind ATP. Residues Asp-71 and Glu-139 each contribute to the Mg(2+) site. Residues 146–148 (DIE) and Lys-222 contribute to the CTP site. Lys-222 provides a ligand contact to UTP. Positions 290-536 (RIAIIAKYHK…IKAAIEYNKC (247 aa)) constitute a Glutamine amidotransferase type-1 domain. Gly-352 is a binding site for L-glutamine. Catalysis depends on Cys-379, which acts as the Nucleophile; for glutamine hydrolysis. L-glutamine contacts are provided by residues 380–383 (FGMQ), Glu-403, and Arg-464. Active-site residues include His-509 and Glu-511.

This sequence belongs to the CTP synthase family. Homotetramer.

The catalysed reaction is UTP + L-glutamine + ATP + H2O = CTP + L-glutamate + ADP + phosphate + 2 H(+). The enzyme catalyses L-glutamine + H2O = L-glutamate + NH4(+). It catalyses the reaction UTP + NH4(+) + ATP = CTP + ADP + phosphate + 2 H(+). Its pathway is pyrimidine metabolism; CTP biosynthesis via de novo pathway; CTP from UDP: step 2/2. Allosterically activated by GTP, when glutamine is the substrate; GTP has no effect on the reaction when ammonia is the substrate. The allosteric effector GTP functions by stabilizing the protein conformation that binds the tetrahedral intermediate(s) formed during glutamine hydrolysis. Inhibited by the product CTP, via allosteric rather than competitive inhibition. In terms of biological role, catalyzes the ATP-dependent amination of UTP to CTP with either L-glutamine or ammonia as the source of nitrogen. Regulates intracellular CTP levels through interactions with the four ribonucleotide triphosphates. The sequence is that of CTP synthase from Rickettsia conorii (strain ATCC VR-613 / Malish 7).